Consider the following 234-residue polypeptide: MRLVQLSRHSIAFPSPEGALREPNGLLALGGDLSPARLLMAYQHGIFPWFSPGDPILWWSPDPRAVLWPEEFHLSRSMKRFHNTSPYRVTLNYAFDRVIDGCTNHRDEGTWITRGIEEAYRRLHELGHAHSIEVWRDQELVGGMYGVSQGALFCGESMFSRKENASKTALLVFCAEFIHHGGKLIDCQVLNSHTASLGAIEIPRCDYLEHLSRLRQQPLVSRFWVPRTLFLPRK.

The protein belongs to the L/F-transferase family.

Its subcellular location is the cytoplasm. It catalyses the reaction N-terminal L-lysyl-[protein] + L-leucyl-tRNA(Leu) = N-terminal L-leucyl-L-lysyl-[protein] + tRNA(Leu) + H(+). It carries out the reaction N-terminal L-arginyl-[protein] + L-leucyl-tRNA(Leu) = N-terminal L-leucyl-L-arginyl-[protein] + tRNA(Leu) + H(+). The catalysed reaction is L-phenylalanyl-tRNA(Phe) + an N-terminal L-alpha-aminoacyl-[protein] = an N-terminal L-phenylalanyl-L-alpha-aminoacyl-[protein] + tRNA(Phe). In terms of biological role, functions in the N-end rule pathway of protein degradation where it conjugates Leu, Phe and, less efficiently, Met from aminoacyl-tRNAs to the N-termini of proteins containing an N-terminal arginine or lysine. This chain is Leucyl/phenylalanyl-tRNA--protein transferase, found in Salmonella arizonae (strain ATCC BAA-731 / CDC346-86 / RSK2980).